The primary structure comprises 159 residues: MAELDDQFETTDSGASTTYPMQCSALRKNGFVMLKSRPCKIVEMSTSKTGKHGHAKVHMVGIDIFSNKKYEDICPSTHNMDVPNVKREDLQLIAISDDSFLTLMTESGDLREDLKVPEGELGEQLRLDFDSGKDLLCTVLKACGEECVIAIKTNTALDK.

Lys51 is subject to Hypusine.

It belongs to the eIF-5A family. Lys-51 undergoes hypusination, a unique post-translational modification that consists in the addition of a butylamino group from spermidine to lysine side chain, leading to the formation of the unusual amino acid hypusine. eIF-5As are the only known proteins to undergo this modification, which is essential for their function.

The protein localises to the cytoplasm. Its function is as follows. Translation factor that promotes translation elongation and termination, particularly upon ribosome stalling at specific amino acid sequence contexts. Binds between the exit (E) and peptidyl (P) site of the ribosome and promotes rescue of stalled ribosome: specifically required for efficient translation of polyproline-containing peptides as well as other motifs that stall the ribosome. Acts as a ribosome quality control (RQC) cofactor by joining the RQC complex to facilitate peptidyl transfer during CAT tailing step. Functions as a regulator of autophagy. This is Eukaryotic translation initiation factor 5A from Drosophila melanogaster (Fruit fly).